The following is a 156-amino-acid chain: Putative pre-16S rRNA nuclease (156 aa).

This sequence belongs to the YqgF nuclease family.

Its subcellular location is the cytoplasm. Its function is as follows. Could be a nuclease involved in processing of the 5'-end of pre-16S rRNA. The protein is Putative pre-16S rRNA nuclease of Aromatoleum aromaticum (strain DSM 19018 / LMG 30748 / EbN1) (Azoarcus sp. (strain EbN1)).